Here is a 152-residue protein sequence, read N- to C-terminus: Probable spermine N(1)-acetyltransferase (152 aa).

One can recognise an N-acetyltransferase domain in the interval 3 to 152 (INIKAVTDDN…NGEKVMVKEL (150 aa)). Acetyl-CoA contacts are provided by residues 82–84 (FFI), 89–95 (QGKGLGK), and 122–131 (NIHAIRLYQR). Residue Tyr-129 is the Proton donor of the active site.

It belongs to the acetyltransferase family.

The enzyme catalyses an alkane-alpha,omega-diamine + acetyl-CoA = an N-acetylalkane-alpha,omega-diamine + CoA + H(+). It carries out the reaction spermine + acetyl-CoA = N(1)-acetylspermine + CoA + H(+). Its pathway is amine and polyamine degradation; spermine degradation. Its function is as follows. Probably acetylates spermine to N(1)-acetylspermine. This is Probable spermine N(1)-acetyltransferase from Bacillus subtilis subsp. natto (strain BEST195).